The primary structure comprises 88 residues: Cell division topological specificity factor (88 aa).

It belongs to the MinE family.

Functionally, prevents the cell division inhibition by proteins MinC and MinD at internal division sites while permitting inhibition at polar sites. This ensures cell division at the proper site by restricting the formation of a division septum at the midpoint of the long axis of the cell. The chain is Cell division topological specificity factor from Aeromonas hydrophila subsp. hydrophila (strain ATCC 7966 / DSM 30187 / BCRC 13018 / CCUG 14551 / JCM 1027 / KCTC 2358 / NCIMB 9240 / NCTC 8049).